Here is a 445-residue protein sequence, read N- to C-terminus: D-serine transporter DsdX (445 aa).

The Cytoplasmic portion of the chain corresponds to 1–4 (MHSQ). Residues 5–25 (IWVVSTLLISIVLIVLTIVKF) traverse the membrane as a helical segment. Over 26-28 (KFH) the chain is Periplasmic. A helical transmembrane segment spans residues 29–49 (PFLALLLASFFVGTMMGMGPL). Over 50–56 (DMVNAIE) the chain is Cytoplasmic. Residues 57–77 (SGIGGTLGFLAAVIGLGTILG) form a helical membrane-spanning segment. The Periplasmic portion of the chain corresponds to 78–105 (KMMEVSGAAERIGLTLQRCRWLSVDVIM). The helical transmembrane segment at 106–126 (VLVGLICGITLFVEVGVVLLI) threads the bilayer. Topologically, residues 127–139 (PLAFSIAKKTNTS) are cytoplasmic. A helical membrane pass occupies residues 140–160 (LLKLAIPLCTALMAVHCVVPP). Residues 161 to 177 (HPAALYVANKLGADIGS) are Periplasmic-facing. The helical transmembrane segment at 178-198 (VIVYGLLVGLMASLIGGPLFL) threads the bilayer. Residues 199-223 (KFLGQRLPFKPVPTEFADLKVRDEK) lie on the Cytoplasmic side of the membrane. Residues 224 to 244 (TLPSLGATLFTILLPIALMLV) traverse the membrane as a helical segment. At 245–257 (KTIAELNMARESG) the chain is on the periplasmic side. A helical transmembrane segment spans residues 258-278 (LYILVEFIGNPITAMFIAVFV). The Cytoplasmic portion of the chain corresponds to 279–301 (AYYVLGIRQHMSMGTMLTHTENG). The helical transmembrane segment at 302 to 322 (FGSIANILLIIGAGGAFNAIL) threads the bilayer. Topologically, residues 323–342 (KSSSLADTLAVILSNMHMHP) are periplasmic. Transmembrane regions (helical) follow at residues 343-363 (ILLA…ATVA), 364-384 (MMGA…ISPE), and 385-405 (IIAI…DSLF). The Cytoplasmic portion of the chain corresponds to 406–424 (WLVKQYCGATLNETFKYYT). A helical transmembrane segment spans residues 425-445 (TATFIASVVALAGTFLLSFII).

This sequence belongs to the GntP permease family.

It localises to the cell inner membrane. In terms of biological role, a D-serine-specific transporter, may function as a H(+) symporter. This is D-serine transporter DsdX from Escherichia coli (strain K12).